We begin with the raw amino-acid sequence, 416 residues long: UDP-N-acetylmuramoylalanine--D-glutamate ligase (416 aa).

Glycine 108 to threonine 114 lines the ATP pocket.

This sequence belongs to the MurCDEF family.

The protein localises to the cytoplasm. It carries out the reaction UDP-N-acetyl-alpha-D-muramoyl-L-alanine + D-glutamate + ATP = UDP-N-acetyl-alpha-D-muramoyl-L-alanyl-D-glutamate + ADP + phosphate + H(+). It participates in cell wall biogenesis; peptidoglycan biosynthesis. In terms of biological role, cell wall formation. Catalyzes the addition of glutamate to the nucleotide precursor UDP-N-acetylmuramoyl-L-alanine (UMA). The protein is UDP-N-acetylmuramoylalanine--D-glutamate ligase of Chlamydia trachomatis serovar L2b (strain UCH-1/proctitis).